A 487-amino-acid chain; its full sequence is L-tartrate/succinate antiporter (487 aa).

Helical transmembrane passes span 10–30 (YLAP…AGLE), 33–53 (TWLY…EPVP), 54–74 (GAVV…WLLF), 93–113 (WAVS…FMFG), 137–157 (TLFL…VTPS), 189–209 (IGSY…AIFL), 236–256 (FLGM…LAYV), 292–312 (LMVG…AAMV), 313–333 (GYSV…DIVS), 340–360 (VFFW…TGFI), 370–390 (SLSG…FYLL), 393–413 (FFAS…AAAL), 418–438 (IPLP…SILT), and 465–485 (IFGL…MPVV).

This sequence belongs to the SLC13A/DASS transporter (TC 2.A.47) family. DIT1 subfamily.

The protein localises to the cell inner membrane. It catalyses the reaction (2R,3R)-tartrate(out) + succinate(in) = (2R,3R)-tartrate(in) + succinate(out). In terms of biological role, catalyzes the uptake of tartrate in exchange for intracellular succinate. Essential for anaerobic L-tartrate fermentation. This chain is L-tartrate/succinate antiporter (ttdT), found in Escherichia coli O157:H7.